The chain runs to 397 residues: Tryptophan synthase beta chain (397 aa).

Lys-90 is subject to N6-(pyridoxal phosphate)lysine.

This sequence belongs to the TrpB family. In terms of assembly, tetramer of two alpha and two beta chains. Pyridoxal 5'-phosphate is required as a cofactor.

It catalyses the reaction (1S,2R)-1-C-(indol-3-yl)glycerol 3-phosphate + L-serine = D-glyceraldehyde 3-phosphate + L-tryptophan + H2O. It participates in amino-acid biosynthesis; L-tryptophan biosynthesis; L-tryptophan from chorismate: step 5/5. Its function is as follows. The beta subunit is responsible for the synthesis of L-tryptophan from indole and L-serine. In Nitrosomonas europaea (strain ATCC 19718 / CIP 103999 / KCTC 2705 / NBRC 14298), this protein is Tryptophan synthase beta chain.